An 892-amino-acid polypeptide reads, in one-letter code: UPF0182 protein MCA2716 (892 aa).

7 helical membrane passes run 7–27 (LLTS…AIVL), 57–77 (ILSG…FWAA), 107–127 (GALP…ALPF), 163–183 (ILVL…VMVA), 206–226 (IHLN…YVLQ), 252–272 (LPLI…ALWF), and 281–301 (LALT…IDVV).

This sequence belongs to the UPF0182 family.

Its subcellular location is the cell membrane. The protein is UPF0182 protein MCA2716 of Methylococcus capsulatus (strain ATCC 33009 / NCIMB 11132 / Bath).